A 414-amino-acid polypeptide reads, in one-letter code: 2,3-diketo-5-methylthiopentyl-1-phosphate enolase (414 aa).

The active-site Proton acceptor is the lysine 99. Substrate contacts are provided by residues lysine 148, 174-177, histidine 265, glycine 338, and 360-361; these read KDDE and GG. Mg(2+) contacts are provided by lysine 174, aspartate 176, and glutamate 177. Lysine 174 is subject to N6-carboxylysine.

The protein belongs to the RuBisCO large chain family. Type IV subfamily. In terms of assembly, homodimer. Mg(2+) serves as cofactor.

It catalyses the reaction 5-methylsulfanyl-2,3-dioxopentyl phosphate = 2-hydroxy-5-methylsulfanyl-3-oxopent-1-enyl phosphate. The protein operates within amino-acid biosynthesis; L-methionine biosynthesis via salvage pathway; L-methionine from S-methyl-5-thio-alpha-D-ribose 1-phosphate: step 3/6. In terms of biological role, catalyzes the enolization of 2,3-diketo-5-methylthiopentyl-1-phosphate (DK-MTP-1-P) into 2-hydroxy-3-keto-5-methylthiopentenyl-1-phosphate (HK-MTPenyl-1-P). The polypeptide is 2,3-diketo-5-methylthiopentyl-1-phosphate enolase (Bacillus anthracis (strain CDC 684 / NRRL 3495)).